The chain runs to 76 residues: Exodeoxyribonuclease 7 small subunit (76 aa).

Belongs to the XseB family. In terms of assembly, heterooligomer composed of large and small subunits.

Its subcellular location is the cytoplasm. The enzyme catalyses Exonucleolytic cleavage in either 5'- to 3'- or 3'- to 5'-direction to yield nucleoside 5'-phosphates.. In terms of biological role, bidirectionally degrades single-stranded DNA into large acid-insoluble oligonucleotides, which are then degraded further into small acid-soluble oligonucleotides. The polypeptide is Exodeoxyribonuclease 7 small subunit (Geotalea uraniireducens (strain Rf4) (Geobacter uraniireducens)).